Here is a 102-residue protein sequence, read N- to C-terminus: Small integral membrane protein 29 (102 aa).

An N-linked (GlcNAc...) asparagine glycan is attached at Asn3. A helical transmembrane segment spans residues 21 to 41 (VLGPFFLITLVGVVVAVVMYV).

Its subcellular location is the membrane. The sequence is that of Small integral membrane protein 29 from Mus musculus (Mouse).